The sequence spans 817 residues: Neurabin-2 (817 aa).

Disordered regions lie at residues 1 to 52 and 64 to 163; these read MMKT…KYGS and MGTT…GGDK. Actin-binding stretches follow at residues 1-154 and 164-282; these read MMKT…FERS and EAVA…QHRV. Serine 15 bears the Phosphoserine; by MAPK1 mark. Phosphoserine; by CDK5 is present on serine 17. The residue at position 94 (serine 94) is a Phosphoserine; by PKA. A phosphoserine mark is found at serine 100 and serine 116. Residues 100 to 371 form an interaction with D(2) dopamine receptor region; it reads SLNENVDHSA…LERGVDNGRA (272 aa). The segment covering 131–141 has biased composition (pro residues); sequence SAQPAPPPHPP. Residues 169–255 are interaction with ADRA2A, ADRA2B and ADRA2C; sequence RLLRQERAGL…KRSRVFQPPP (87 aa). Serine 192 carries the post-translational modification Phosphoserine. Residue threonine 193 is modified to Phosphothreonine. At serine 205 the chain carries Phosphoserine; by MAPK1. A Phosphothreonine modification is found at threonine 207. Residues 216 to 451 are disordered; that stretch reads EKADSRTGLH…DPAPSRKIHF (236 aa). Basic and acidic residues predominate over residues 290–301; that stretch reads KPREVRKIKPVE. 2 stretches are compositionally biased toward low complexity: residues 332-341 and 399-409; these read STPATTASPA and SGLGEDSGGSA. The span at 410–425 shows a compositional bias: acidic residues; it reads LEEDDEEDEEDGEPPY. The interaction with protein phosphatase 1 stretch occupies residues 417–494; that stretch reads DEEDGEPPYE…LEKRVERLEL (78 aa). At serine 438 the chain carries Phosphoserine. Residues 447 to 451 carry the PP1-binding motif motif; sequence RKIHF. The interaction with RGS2 stretch occupies residues 480–525; that stretch reads SAEYELEKRVERLELFPVELEKDSEGLGISIIGMGAGADMGLEKLG. The 89-residue stretch at 496 to 584 folds into the PDZ domain; it reads PVELEKDSEG…RVRFMIGRER (89 aa). Residues 595-616 adopt a coiled-coil conformation; that stretch reads IQQTLEQERWQREMMEQRYAQY. Residues 595 to 816 are interaction with TGN38; the sequence is IQQTLEQERW…NLQTLRNSNS (222 aa). The residue at position 658 (serine 658) is a Phosphoserine. Residues 665 to 816 adopt a coiled-coil conformation; sequence EKLVHKFKEL…NLQTLRNSNS (152 aa).

As to quaternary structure, possibly exists as a homodimer, homotrimer or a homotetramer. Interacts with F-actin, PPP1CA, neurabin-1, TGN38 and D(2) dopamine receptor. Interacts with RGS1, RGS2, RGS4, RGS19 and ADRA1B, ADRA2A, ADRA2B, ADRA2C, CDKN2A, PPP1R2, RASGFR1 and TIAM1. Interacts (via C-terminus) with SPATA13 (via C-terminal tail). Interacts with DCLK2. Interacts with ADRA2B. Post-translationally, stimulation of D1 (but not D2) dopamine receptors induces Ser-94 phosphorylation. Dephosphorylation of Ser-94 is mediated mainly by PP1 and to a lesser extent by PP2A. Phosphorylation of spinophilin disrupts its association with F-actin, but does not affect its binding to PP1.

The protein resides in the cytoplasm. Its subcellular location is the cytoskeleton. It localises to the nucleus. The protein localises to the postsynaptic density. It is found in the cell junction. The protein resides in the adherens junction. Its subcellular location is the cell projection. It localises to the dendritic spine. The protein localises to the cell membrane. It is found in the lamellipodium. The protein resides in the filopodium. Its subcellular location is the ruffle membrane. Functionally, seems to act as a scaffold protein in multiple signaling pathways. Modulates excitatory synaptic transmission and dendritic spine morphology. Binds to actin filaments (F-actin) and shows cross-linking activity. Binds along the sides of the F-actin. May play an important role in linking the actin cytoskeleton to the plasma membrane at the synaptic junction. Believed to target protein phosphatase 1/PP1 to dendritic spines, which are rich in F-actin, and regulates its specificity toward ion channels and other substrates, such as AMPA-type and NMDA-type glutamate receptors. Plays a role in regulation of G-protein coupled receptor signaling, including dopamine D2 receptors and alpha-adrenergic receptors. May establish a signaling complex for dopaminergic neurotransmission through D2 receptors by linking receptors downstream signaling molecules and the actin cytoskeleton. Binds to ADRA1B and RGS2 and mediates regulation of ADRA1B signaling. May confer to Rac signaling specificity by binding to both, RacGEFs and Rac effector proteins. Probably regulates p70 S6 kinase activity by forming a complex with TIAM1. Required for hepatocyte growth factor (HGF)-induced cell migration. This chain is Neurabin-2 (Ppp1r9b), found in Mus musculus (Mouse).